A 220-amino-acid polypeptide reads, in one-letter code: Ribosomal RNA large subunit methyltransferase E (220 aa).

Positions 1-10 (MSRSGKDPGK) are enriched in basic and acidic residues. The disordered stretch occupies residues 1-24 (MSRSGKDPGKRVKTARKRSASSTR). The S-adenosyl-L-methionine site is built by Gly-75, Trp-77, Asp-94, Asp-110, and Asp-134. Lys-174 acts as the Proton acceptor in catalysis.

Belongs to the class I-like SAM-binding methyltransferase superfamily. RNA methyltransferase RlmE family.

It is found in the cytoplasm. It catalyses the reaction uridine(2552) in 23S rRNA + S-adenosyl-L-methionine = 2'-O-methyluridine(2552) in 23S rRNA + S-adenosyl-L-homocysteine + H(+). Functionally, specifically methylates the uridine in position 2552 of 23S rRNA at the 2'-O position of the ribose in the fully assembled 50S ribosomal subunit. In Erythrobacter litoralis (strain HTCC2594), this protein is Ribosomal RNA large subunit methyltransferase E.